The following is a 477-amino-acid chain: Enolase 1, chloroplastic (477 aa).

The transit peptide at 1 to 41 (MALTTKPHHLQRSFLSPSRVSGERYLESAPSCLRFRRSGVQ) directs the protein to the chloroplast. His203 and Glu212 together coordinate substrate. Glu255 (proton donor) is an active-site residue. Positions 290, 340, and 365 each coordinate Mg(2+). Residues Glu340 and Asp365 each contribute to the substrate site. The active-site Proton acceptor is the Lys390. Substrate is bound by residues 417–420 (SHRS) and Lys441. Position 476 is a phosphoserine (Ser476).

The protein belongs to the enolase family. The cofactor is Mg(2+). Highly expressed in young roots, young siliques, and shoot apex. Lowly expressed in young leaves, stems and cotyledons.

It is found in the plastid. The protein resides in the chloroplast. It carries out the reaction (2R)-2-phosphoglycerate = phosphoenolpyruvate + H2O. Its pathway is carbohydrate degradation; glycolysis; pyruvate from D-glyceraldehyde 3-phosphate: step 4/5. This is Enolase 1, chloroplastic (ENO1) from Arabidopsis thaliana (Mouse-ear cress).